The sequence spans 132 residues: mRNA interferase toxin YafO (132 aa).

In terms of assembly, probably forms a complex with the antitoxin YafN which inhibits the mRNA interferase activity.

Functionally, toxic component of a type II toxin-antitoxin (TA) system. A translation-dependent mRNA interferase. Overexpression causes cessation of cell growth and inhibits cell proliferation via inhibition of translation; this blockage is overcome by subsequent expression of antitoxin YafN. Overexpression causes cleavage of a number of mRNAs in a ribosome-dependent fashion. YafO binding to the 50S ribosomal subunit in the translation complex induces mRNA cleavage 3' to the region protected by the ribosome; YafO alone is not able to digest mRNA. This is mRNA interferase toxin YafO (yafO) from Escherichia coli (strain K12).